A 321-amino-acid polypeptide reads, in one-letter code: Cytoskeleton protein RodZ (321 aa).

Residues 1 to 111 (MNTEATHDQN…LGKRRKKRDG (111 aa)) lie on the Cytoplasmic side of the membrane. The region spanning 19-71 (LRNAREQLGLSQQAVAERLCLKVSTVRDIEEDKAPSDLASTFLRGYIRSYARL) is the HTH cro/C1-type domain. The segment at residues 30-49 (QQAVAERLCLKVSTVRDIEE) is a DNA-binding region (H-T-H motif). The chain crosses the membrane as a helical; Signal-anchor for type II membrane protein span at residues 112 to 132 (WLMSFTWLVLFVVVGLTGAWW). The Periplasmic portion of the chain corresponds to 133–321 (WQNHKAQQEE…TINAEPTSAQ (189 aa)). Positions 167-190 (DTRAAASQDTTPAETAPAAPVDST) are disordered. Over residues 176–190 (TTPAETAPAAPVDST) the composition is skewed to low complexity.

The protein belongs to the RodZ family.

The protein localises to the cell inner membrane. Functionally, cytoskeletal protein that is involved in cell-shape control through regulation of the length of the long axis. The chain is Cytoskeleton protein RodZ from Salmonella arizonae (strain ATCC BAA-731 / CDC346-86 / RSK2980).